Here is a 1206-residue protein sequence, read N- to C-terminus: DNA-directed RNA polymerase subunit beta' (1206 aa).

Zn(2+) contacts are provided by Cys60, Cys62, Cys75, and Cys78. Mg(2+)-binding residues include Asp449, Asp451, and Asp453. Residues Cys818, Cys892, Cys899, and Cys902 each coordinate Zn(2+).

This sequence belongs to the RNA polymerase beta' chain family. In terms of assembly, the RNAP catalytic core consists of 2 alpha, 1 beta, 1 beta' and 1 omega subunit. When a sigma factor is associated with the core the holoenzyme is formed, which can initiate transcription. Requires Mg(2+) as cofactor. Zn(2+) is required as a cofactor.

The catalysed reaction is RNA(n) + a ribonucleoside 5'-triphosphate = RNA(n+1) + diphosphate. In terms of biological role, DNA-dependent RNA polymerase catalyzes the transcription of DNA into RNA using the four ribonucleoside triphosphates as substrates. This Halalkalibacterium halodurans (strain ATCC BAA-125 / DSM 18197 / FERM 7344 / JCM 9153 / C-125) (Bacillus halodurans) protein is DNA-directed RNA polymerase subunit beta'.